Reading from the N-terminus, the 291-residue chain is tRNA U34 carboxymethyltransferase (291 aa).

Carboxy-S-adenosyl-L-methionine-binding positions include Lys-61, Trp-75, Lys-80, Gly-100, 122–124, 149–150, Tyr-169, and Arg-284; these read DPS and VE.

This sequence belongs to the class I-like SAM-binding methyltransferase superfamily. CmoB family. In terms of assembly, homotetramer.

It catalyses the reaction carboxy-S-adenosyl-L-methionine + 5-hydroxyuridine(34) in tRNA = 5-carboxymethoxyuridine(34) in tRNA + S-adenosyl-L-homocysteine + H(+). Functionally, catalyzes carboxymethyl transfer from carboxy-S-adenosyl-L-methionine (Cx-SAM) to 5-hydroxyuridine (ho5U) to form 5-carboxymethoxyuridine (cmo5U) at position 34 in tRNAs. The chain is tRNA U34 carboxymethyltransferase from Campylobacter jejuni subsp. jejuni serotype O:2 (strain ATCC 700819 / NCTC 11168).